The chain runs to 24 residues: Humanin-like 10 (24 aa).

Belongs to the humanin family. Expressed in mature brain, thyroid gland and testis.

The protein localises to the secreted. It localises to the cytoplasm. Its function is as follows. Plays a role as a neuroprotective and antiapoptotic factor. The chain is Humanin-like 10 from Homo sapiens (Human).